Consider the following 260-residue polypeptide: Thiazole synthase (260 aa).

The Schiff-base intermediate with DXP role is filled by Lys-96. 1-deoxy-D-xylulose 5-phosphate contacts are provided by residues Gly-157, 184-185, and 206-207; these read AG and NT.

Belongs to the ThiG family. In terms of assembly, homotetramer. Forms heterodimers with either ThiH or ThiS.

Its subcellular location is the cytoplasm. It catalyses the reaction [ThiS sulfur-carrier protein]-C-terminal-Gly-aminoethanethioate + 2-iminoacetate + 1-deoxy-D-xylulose 5-phosphate = [ThiS sulfur-carrier protein]-C-terminal Gly-Gly + 2-[(2R,5Z)-2-carboxy-4-methylthiazol-5(2H)-ylidene]ethyl phosphate + 2 H2O + H(+). Its pathway is cofactor biosynthesis; thiamine diphosphate biosynthesis. Functionally, catalyzes the rearrangement of 1-deoxy-D-xylulose 5-phosphate (DXP) to produce the thiazole phosphate moiety of thiamine. Sulfur is provided by the thiocarboxylate moiety of the carrier protein ThiS. In vitro, sulfur can be provided by H(2)S. This is Thiazole synthase from Rhodopseudomonas palustris (strain TIE-1).